The sequence spans 130 residues: uncharacterized protein (130 aa).

The signal sequence occupies residues 1 to 23 (MINRKVVYALSALLLFVYSYAFI).

This is an uncharacterized protein from Aquifex aeolicus (strain VF5).